A 481-amino-acid chain; its full sequence is Adenosylhomocysteinase (481 aa).

Residues threonine 65, aspartate 140, and glutamate 200 each coordinate substrate. 201-203 (TTT) contacts NAD(+). 2 residues coordinate substrate: lysine 230 and aspartate 234. Residues asparagine 235, 264–269 (GYGDVG), glutamate 287, asparagine 322, 343–345 (IGH), and asparagine 393 each bind NAD(+).

This sequence belongs to the adenosylhomocysteinase family. NAD(+) serves as cofactor.

The protein localises to the cytoplasm. It catalyses the reaction S-adenosyl-L-homocysteine + H2O = L-homocysteine + adenosine. The protein operates within amino-acid biosynthesis; L-homocysteine biosynthesis; L-homocysteine from S-adenosyl-L-homocysteine: step 1/1. Its function is as follows. May play a key role in the regulation of the intracellular concentration of adenosylhomocysteine. This is Adenosylhomocysteinase from Polynucleobacter asymbioticus (strain DSM 18221 / CIP 109841 / QLW-P1DMWA-1) (Polynucleobacter necessarius subsp. asymbioticus).